The chain runs to 383 residues: Na(+)/H(+) antiporter NhaA (383 aa).

11 consecutive transmembrane segments (helical) span residues 10 to 30 (LIGG…NNSP), 56 to 76 (LMHW…GLEI), 91 to 111 (IITP…IYLS), 121 to 141 (GWAI…ALLG), 150 to 170 (LLVI…IAIF), 174 to 194 (SLSL…IICN), 206 to 226 (VVLG…ATLA), 254 to 274 (PWII…ISFS), 289 to 308 (IIWG…LAVF), 327 to 347 (GISL…VLAF), and 355 to 375 (AIKI…YIVL).

It belongs to the NhaA Na(+)/H(+) (TC 2.A.33) antiporter family.

It is found in the cell inner membrane. It catalyses the reaction Na(+)(in) + 2 H(+)(out) = Na(+)(out) + 2 H(+)(in). In terms of biological role, na(+)/H(+) antiporter that extrudes sodium in exchange for external protons. The protein is Na(+)/H(+) antiporter NhaA of Francisella tularensis subsp. mediasiatica (strain FSC147).